We begin with the raw amino-acid sequence, 206 residues long: Protein GrpE (206 aa).

A compositionally biased stretch (basic and acidic residues) spans 1–14 (MDKKNEQQEVREEN). A disordered region spans residues 1–56 (MDKKNEQQEVREENDTSINQESETQVELEEEVVNEECETSSEKTDEKEVDDENVTD). The segment covering 24–39 (TQVELEEEVVNEECET) has biased composition (acidic residues).

Belongs to the GrpE family. Homodimer.

Its subcellular location is the cytoplasm. Its function is as follows. Participates actively in the response to hyperosmotic and heat shock by preventing the aggregation of stress-denatured proteins, in association with DnaK and GrpE. It is the nucleotide exchange factor for DnaK and may function as a thermosensor. Unfolded proteins bind initially to DnaJ; upon interaction with the DnaJ-bound protein, DnaK hydrolyzes its bound ATP, resulting in the formation of a stable complex. GrpE releases ADP from DnaK; ATP binding to DnaK triggers the release of the substrate protein, thus completing the reaction cycle. Several rounds of ATP-dependent interactions between DnaJ, DnaK and GrpE are required for fully efficient folding. The polypeptide is Protein GrpE (Clostridioides difficile (strain 630) (Peptoclostridium difficile)).